The sequence spans 257 residues: Folate receptor alpha (257 aa).

The first 24 residues, 1–24 (MAQRMTTQLLLLLVWVAVVGEAQT), serve as a signal peptide directing secretion. 8 cysteine pairs are disulfide-bonded: cysteine 37-cysteine 65, cysteine 57-cysteine 105, cysteine 66-cysteine 109, cysteine 89-cysteine 175, cysteine 96-cysteine 146, cysteine 135-cysteine 209, cysteine 139-cysteine 189, and cysteine 152-cysteine 169. Asparagine 69 carries N-linked (GlcNAc...) asparagine glycosylation. Folate is bound by residues aspartate 103, tyrosine 107, 124–128 (WRKER), 157–162 (HKGWNW), and serine 196. N-linked (GlcNAc...) asparagine glycosylation is present at asparagine 161. The N-linked (GlcNAc...) asparagine glycan is linked to asparagine 201. Serine 234 is lipidated: GPI-anchor amidated serine. Residues 235 to 257 (GAGPWAAWPFLLSLALMLLWLLS) constitute a propeptide, removed in mature form.

Belongs to the folate receptor family. In terms of processing, the secreted form is derived from the membrane-bound form either by cleavage of the GPI anchor, or/and by proteolysis catalyzed by a metalloprotease. In terms of tissue distribution, primarily expressed in tissues of epithelial origin. Expression is increased in malignant tissues. Expressed in kidney, lung and cerebellum. Detected in placenta and thymus epithelium.

It is found in the cell membrane. Its subcellular location is the apical cell membrane. The protein resides in the basolateral cell membrane. The protein localises to the secreted. It localises to the cytoplasmic vesicle. It is found in the clathrin-coated vesicle. Its subcellular location is the endosome. Functionally, binds to folate and reduced folic acid derivatives and mediates delivery of 5-methyltetrahydrofolate and folate analogs into the interior of cells. Has high affinity for folate and folic acid analogs at neutral pH. Exposure to slightly acidic pH after receptor endocytosis triggers a conformation change that strongly reduces its affinity for folates and mediates their release. Required for normal embryonic development and normal cell proliferation. In Homo sapiens (Human), this protein is Folate receptor alpha (FOLR1).